The primary structure comprises 173 residues: Probable DNA-directed RNA polymerase subunit delta (173 aa).

Residues 14–81 (LSMIELGVKI…GSGMWGLKRW (68 aa)) form the HTH HARE-type domain. A disordered region spans residues 86–173 (QAEEEITEEP…EDENDDDNTR (88 aa)). Over residues 109–173 (IDDVDDDLDV…EDENDDDNTR (65 aa)) the composition is skewed to acidic residues.

It belongs to the RpoE family. As to quaternary structure, RNAP is composed of a core of 2 alpha, a beta and a beta' subunits. The core is associated with a delta subunit and one of several sigma factors.

Its function is as follows. Participates in both the initiation and recycling phases of transcription. In the presence of the delta subunit, RNAP displays an increased specificity of transcription, a decreased affinity for nucleic acids, and an increased efficiency of RNA synthesis because of enhanced recycling. This is Probable DNA-directed RNA polymerase subunit delta from Oceanobacillus iheyensis (strain DSM 14371 / CIP 107618 / JCM 11309 / KCTC 3954 / HTE831).